The following is a 412-amino-acid chain: MVATSATSSFFPVPSSSLDPNGKGNKIGSTNLAGLNSAPNSGRMKVKPNAQAPPKINGKKVGLPGSVDIVRTDTETSSHPAPRTFINQLPDWSMLLAAITTIFLAAEKQWMMLDWKPRRSDMLVDPFGIGRIVQDGLVFRQNFSIRSYEIGADRSASIETVMNHLQETALNHVKTAGLLGDGFGSTPEMFKKNLIWVVTRMQVVVDKYPTWGDVVEVDTWVSQSGKNGMRRDWLVRDCNTGETLTRASSVWVMMNKLTRRLSKIPEEVRGEIEPYFVNSDPVLAEDSRKLTKIDDKTADYVRSGLTPRWSDLDVNQHVNNVKYIGWILESAPVGIMERQKLKSMTLEYRRECGRDSVLQSLTAVTGCDIGNLATAGDVECQHLLRLQDGAEVVRGRTEWSSKTPTTTWGTAP.

Composition is skewed to polar residues over residues 1–19 (MVAT…SSLD) and 27–40 (IGST…SAPN). The N-terminal 49 residues, 1-49 (MVATSATSSFFPVPSSSLDPNGKGNKIGSTNLAGLNSAPNSGRMKVKPN), are a transit peptide targeting the chloroplast. A disordered region spans residues 1 to 64 (MVATSATSSF…KINGKKVGLP (64 aa)). Residues N315, H317, and C352 contribute to the active site.

The protein belongs to the acyl-ACP thioesterase family. As to expression, highly expressed in flowers. Expressed in roots, leaves, stems, siliques and seeds.

The protein resides in the plastid. It is found in the chloroplast. It carries out the reaction hexadecanoyl-[ACP] + H2O = hexadecanoate + holo-[ACP] + H(+). Its function is as follows. Plays an essential role in chain termination during de novo fatty acid synthesis. Possesses high thioesterase activity for palmitoyl-ACP versus other acyl-ACPs. Substrate preference is 16:0 &gt; 18:1 &gt; 18:0 &gt; 16:1. Plays an essential role in the supply of saturated fatty acids necessary for plant growth and seed development. Contributes to 16:0 production particularly in flowers. May be involved in the synthesis of long chain fatty acid. The chain is Palmitoyl-acyl carrier protein thioesterase, chloroplastic (FATB) from Arabidopsis thaliana (Mouse-ear cress).